The following is a 412-amino-acid chain: Serine hydroxymethyltransferase 1 (412 aa).

(6S)-5,6,7,8-tetrahydrofolate is bound by residues L116 and 120 to 122; that span reads GHL. K225 carries the post-translational modification N6-(pyridoxal phosphate)lysine.

This sequence belongs to the SHMT family. Homodimer. Pyridoxal 5'-phosphate is required as a cofactor.

It localises to the cytoplasm. It carries out the reaction (6R)-5,10-methylene-5,6,7,8-tetrahydrofolate + glycine + H2O = (6S)-5,6,7,8-tetrahydrofolate + L-serine. The protein operates within one-carbon metabolism; tetrahydrofolate interconversion. It functions in the pathway amino-acid biosynthesis; glycine biosynthesis; glycine from L-serine: step 1/1. Catalyzes the reversible interconversion of serine and glycine with tetrahydrofolate (THF) serving as the one-carbon carrier. This reaction serves as the major source of one-carbon groups required for the biosynthesis of purines, thymidylate, methionine, and other important biomolecules. Also exhibits THF-independent aldolase activity toward beta-hydroxyamino acids, producing glycine and aldehydes, via a retro-aldol mechanism. The chain is Serine hydroxymethyltransferase 1 from Pseudomonas fluorescens (strain Pf0-1).